Here is a 498-residue protein sequence, read N- to C-terminus: Guanosine-5'-triphosphate,3'-diphosphate pyrophosphatase (498 aa).

It belongs to the GppA/Ppx family. GppA subfamily.

It catalyses the reaction guanosine 3'-diphosphate 5'-triphosphate + H2O = guanosine 3',5'-bis(diphosphate) + phosphate + H(+). Its pathway is purine metabolism; ppGpp biosynthesis; ppGpp from GTP: step 2/2. Its function is as follows. Catalyzes the conversion of pppGpp to ppGpp. Guanosine pentaphosphate (pppGpp) is a cytoplasmic signaling molecule which together with ppGpp controls the 'stringent response', an adaptive process that allows bacteria to respond to amino acid starvation, resulting in the coordinated regulation of numerous cellular activities. This is Guanosine-5'-triphosphate,3'-diphosphate pyrophosphatase from Yersinia pseudotuberculosis serotype O:1b (strain IP 31758).